The following is a 188-amino-acid chain: dCTP deaminase (188 aa).

Residues 111–116 (KSTYAR), 135–137 (TLE), Gln156, Tyr170, Lys179, and Gln180 contribute to the dCTP site. Catalysis depends on Glu137, which acts as the Proton donor/acceptor.

Belongs to the dCTP deaminase family. Homotrimer.

The enzyme catalyses dCTP + H2O + H(+) = dUTP + NH4(+). Its pathway is pyrimidine metabolism; dUMP biosynthesis; dUMP from dCTP (dUTP route): step 1/2. Catalyzes the deamination of dCTP to dUTP. In Rickettsia africae (strain ESF-5), this protein is dCTP deaminase.